A 1003-amino-acid chain; its full sequence is Leucine-rich repeat receptor-like serine/threonine-protein kinase BAM1 (1003 aa).

A signal peptide spans 1-19 (MKLFLLLLFLLHISHTFTA). Topologically, residues 20–640 (SRPISEFRAL…HSKGPLSASM (621 aa)) are extracellular. LRR repeat units follow at residues 68–92 (RRHV…VSHL), 93–116 (RLLQ…ISSL), 117–140 (SGLR…ISSG), 142–165 (VNLR…VTNL), 166–191 (TQLR…SWPV), 193–213 (EYLA…IGNL), 215–238 (TLRE…IGNL), 239–262 (SELV…IGKL), 263–285 (QKLD…ELGT), 286–310 (LSSL…FAEL), 312–334 (NLTL…IGDL), 335–358 (PELE…LGEN), 359–382 (GKLN…MCSG), 385–406 (LETL…LGKC), 407–430 (ESLT…LFGL), 432–454 (KLTQ…GGVS), 455–480 (VNLG…NFTG), 482–502 (QKLL…VGKL), 503–526 (QQLS…ISRC), 527–550 (KLLT…ITAM), 551–574 (KILN…ISSM), and 575–598 (QSLT…GQFS). 6 N-linked (GlcNAc...) asparagine glycosylation sites follow: N80, N97, N123, N130, N153, and N164. N-linked (GlcNAc...) asparagine glycans are attached at residues N212 and N237. Residues N312 and N346 are each glycosylated (N-linked (GlcNAc...) asparagine). N-linked (GlcNAc...) asparagine glycosylation is present at N420. An N-linked (GlcNAc...) asparagine glycan is attached at N477. N557, N586, and N601 each carry an N-linked (GlcNAc...) asparagine glycan. A helical membrane pass occupies residues 641-661 (KLLLVLGLLVCSIAFAVVAII). Residues 662 to 1003 (KARSLKKASE…VQSPPDLLNL (342 aa)) are Cytoplasmic-facing. Position 686 is a phosphothreonine (T686). The Protein kinase domain occupies 694-971 (LKEDNIIGKG…VQILTEIPKL (278 aa)). Residues 700–708 (IGKGGAGIV) and K722 contribute to the ATP site. Y769 and Y807 each carry phosphotyrosine. D820 (proton acceptor) is an active-site residue. At S855 the chain carries Phosphoserine. 2 positions are modified to phosphotyrosine: Y863 and Y870. T871 carries the post-translational modification Phosphothreonine. The segment at 969–1003 (PKLPPSKDQPMTESAPESELSPKSGVQSPPDLLNL) is disordered. Phosphoserine is present on S996.

This sequence belongs to the protein kinase superfamily. Ser/Thr protein kinase family. Self-interacts and interacts with BAM2 and CLV1. Binds to the CLV3, CLE5, CLE11, CLE18, CLE19, CLE22, CLE25, CLE26, CLE40, CLE41 and CLE42 mature peptides, probably via its extracellular leucine-rich repeat region. As to expression, expressed in seedlings, roots, leaves, inflorescences, flowers and siliques.

The protein localises to the cell membrane. It catalyses the reaction L-seryl-[protein] + ATP = O-phospho-L-seryl-[protein] + ADP + H(+). It carries out the reaction L-threonyl-[protein] + ATP = O-phospho-L-threonyl-[protein] + ADP + H(+). Its function is as follows. Necessary for male gametophyte development, as well as ovule specification and function. Involved in cell-cell communication process required during early anther development, and regulating cell division and differentiation to organize cell layers. Required for the development of high-ordered vascular strands within the leaf and a correlated control of leaf shape, size and symmetry. May regulate the CLV1-dependent CLV3-mediated signaling in meristems maintenance. This is Leucine-rich repeat receptor-like serine/threonine-protein kinase BAM1 (BAM1) from Arabidopsis thaliana (Mouse-ear cress).